The primary structure comprises 239 residues: Lactose-binding lectin-2 (239 aa).

Mn(2+) contacts are provided by Glu122 and Asp124. Ca(2+)-binding residues include Asp124, Tyr126, Asn128, and Asp131. Mn(2+) is bound by residues Asp131 and His137.

This sequence belongs to the leguminous lectin family. As to quaternary structure, homotetramer. In terms of tissue distribution, seed.

Its subcellular location is the vacuole. It is found in the aleurone grain. Functionally, lactose-binding lectin. Also binds derivatives of galactose, glucose, lactose, and mannose. Binds O-glycoproteins such as mucins more strongly than N-glycoproteins. Shows agglutinating activity towards rabbit erythrocytes. This chain is Lactose-binding lectin-2, found in Cymbosema roseum (Dioclea purpurea).